The chain runs to 1086 residues: Endo-1,4-beta-xylanase C (1086 aa).

A signal peptide spans 1–31 (MRGKWLRLCLAAVLIVSLLPGLGAGEWKASA). CBM-cenC domains lie at 35–183 (GDIL…IRLV) and 197–359 (GQAL…ITAT). The 346-residue stretch at 365-710 (EKNIPDLAKK…KPAYWALVDP (346 aa)) folds into the GH10 domain. Residue Glu502 is the Proton donor of the active site. The active site involves Asp556. Catalysis depends on Glu620, which acts as the Nucleophile.

This sequence belongs to the glycosyl hydrolase 10 (cellulase F) family.

The catalysed reaction is Endohydrolysis of (1-&gt;4)-beta-D-xylosidic linkages in xylans.. It participates in glycan degradation; xylan degradation. Endoxylanase with high hydrolytic activity on birchwood and oat spelt xylan. Xylotetraose, xylotriose, xylobiose and xylose are the main products from birchwood xylan hydrolysis. Shows increasing activity on xylo-oligosaccharides of increasing length. Displays very low hydrolytic activity on Avicel, carboxymethylcellulose (CMC) and p-nitrophenyl-beta-xylopyranoside. Also shows transxylosidase activity, allowing the formation of xylo-oligosaccharides of higher degree of polymerization than the starting substrate. The polypeptide is Endo-1,4-beta-xylanase C (xynC) (Paenibacillus barcinonensis).